Here is a 921-residue protein sequence, read N- to C-terminus: Short transient receptor potential channel 3 (921 aa).

The segment at 1-73 (MSTKVRKCKE…PPFSHGPDLS (73 aa)) is disordered. Residues 1–459 (MSTKVRKCKE…KILRSPFMKF (459 aa)) are Cytoplasmic-facing. A compositionally biased stretch (acidic residues) spans 19-31 (PEEEEDEGEDEGA). 4 ANK repeats span residues 111-140 (AEEE…TLNV), 146-175 (MGQN…LARI), 177-203 (DALL…FAAS), and 232-261 (PDIT…RIER). E158 is a Ca(2+) binding site. The helical transmembrane segment at 460 to 477 (VAHAASFIIFLGLLVFNA) threads the bilayer. The Extracellular segment spans residues 478-508 (SDRFEGITTLPNITVTDYPKQIFRVKTTQFT). N-linked (GlcNAc...) asparagine glycosylation occurs at N489. The chain crosses the membrane as a helical span at residues 509 to 527 (WTEMLIMVWVLGMMWSECK). Positions 525, 528, and 543 each coordinate Ca(2+). Over 528 to 540 (ELWLEGPREYILQ) the chain is Cytoplasmic. A helical membrane pass occupies residues 541-562 (LWNVLDFGMLSIFIAAFTARFL). Topologically, residues 563-606 (AFLQATKAQQYVDSYVQESDLSEVTLPPEIQYFTYARDKWLPSD) are extracellular. Residues 607–630 (PQIISEGLYAIAVVLSFSRIAYIL) form a helical membrane-spanning segment. Over 631-649 (PANESFGPLQISLGRTVKD) the chain is Cytoplasmic. An ANK 5 repeat occupies 634–663 (ESFGPLQISLGRTVKDIFKFMVLFIMVFFA). A helical transmembrane segment spans residues 650–673 (IFKFMVLFIMVFFAFMIGMFILYS). At 674–713 (YYLGAKVNAAFTTVEESFKTLFWSIFGLSEVTSVVLKYDH) the chain is on the extracellular side. The helical transmembrane segment at 714-739 (KFIENIGYVLYGIYNVTMVVVLLNML) threads the bilayer. Residues 740–921 (IAMINSSYQE…KLNPSMLRCE (182 aa)) are Cytoplasmic-facing. The interval 850–870 (QIMKRLIKRYVLKAQVDKEND) is binds to IP3R3. Ca(2+)-binding residues include E871, E874, E876, and D883.

The protein belongs to the transient receptor (TC 1.A.4) family. STrpC subfamily. TRPC3 sub-subfamily. In terms of assembly, homotetramer. Interacts with ITPR1. Interacts with ITPR3. Interacts with MX1. Interacts with RNF24. Interacts with JPH2; the interaction is involved in maintaining Ca(2+) homeostasis in skeletal muscle and is mediated by JPH2 'Ser-165' phosphorylation. As to quaternary structure, interacts with isoform short of TRPC1. Expressed predominantly in brain and at much lower levels in ovary, colon, small intestine, lung, prostate, placenta and testis.

It localises to the cell membrane. The enzyme catalyses Ca(2+)(in) = Ca(2+)(out). Its activity is regulated as follows. Activated by diacylglycerol (DAG) in a membrane-delimited fashion, independently of protein kinase C. Activated by inositol 1,4,5-triphosphate receptors (ITPR) with bound IP3. May be activated by internal calcium store depletion. Inhibited by intracellular Ca(2+). Functionally, forms a receptor-activated non-selective calcium permeant cation channel. In terms of biological role, forms a receptor-activated non-selective calcium permeant cation channel. May be operated by a phosphatidylinositol second messenger system activated by receptor tyrosine kinases or G-protein coupled receptors. This chain is Short transient receptor potential channel 3 (TRPC3), found in Homo sapiens (Human).